Here is a 604-residue protein sequence, read N- to C-terminus: Baculoviral IAP repeat-containing protein 3 (604 aa).

BIR repeat units follow at residues 29-96, 169-235, and 255-322; these read ELYR…CRFV, ENAR…CPFI, and HAAR…CEYL. 4 residues coordinate Zn(2+): Cys292, Cys295, His312, and Cys319. The 91-residue stretch at 439-529 folds into the CARD domain; sequence KESNDLLLIR…VLYEHLFVQQ (91 aa). An RING-type zinc finger spans residues 557-592; that stretch reads CKVCMDKEVSIVFIPCGHLVVCKDCAPSLRKCPICR.

The protein belongs to the IAP family. As to quaternary structure, interacts with PRSS25; interaction inhibits apoptotic suppressor activity. The BIR motifs region interacts with TNF receptor associated factors 1 and 2 (TRAF1 and TRAF2) to form a heteromeric complex, which is then recruited to the tumor necrosis factor receptor 2 (TNFR2). Interaction with TRAF2 is required for ubiquitination of IKBKE, degradation of NFKBIA and activation of NF-kappa-B. Interacts with RIP1, RIP2, RIP3, RIP4 and USP19. Post-translationally, auto-ubiquitinated and degraded by the proteasome in apoptotic cells. Highly expressed in fetal lung, and kidney. In the adult, expression is mainly seen in lymphoid tissues, including spleen, thymus and peripheral blood lymphocytes.

It is found in the cytoplasm. Its subcellular location is the nucleus. It carries out the reaction S-ubiquitinyl-[E2 ubiquitin-conjugating enzyme]-L-cysteine + [acceptor protein]-L-lysine = [E2 ubiquitin-conjugating enzyme]-L-cysteine + N(6)-ubiquitinyl-[acceptor protein]-L-lysine.. USP19 regulates the stability of BIRC3/c-IAP2 by preventing its ubiquitination. Its function is as follows. Multi-functional protein which regulates not only caspases and apoptosis, but also modulates inflammatory signaling and immunity, mitogenic kinase signaling and cell proliferation, as well as cell invasion and metastasis. Acts as an E3 ubiquitin-protein ligase regulating NF-kappa-B signaling and regulates both canonical and non-canonical NF-kappa-B signaling by acting in opposite directions: acts as a positive regulator of the canonical pathway and suppresses constitutive activation of non-canonical NF-kappa-B signaling. The target proteins for its E3 ubiquitin-protein ligase activity include: RIPK1, RIPK2, RIPK3, RIPK4, CASP3, CASP7, CASP8, IKBKE, TRAF1, and BCL10. Acts as an important regulator of innate immune signaling via regulation of Toll-like receptors (TLRs), Nodlike receptors (NLRs) and RIG-I like receptors (RLRs), collectively referred to as pattern recognition receptors (PRRs). Protects cells from spontaneous formation of the ripoptosome, a large multi-protein complex that has the capability to kill cancer cells in a caspase-dependent and caspase-independent manner. Suppresses ripoptosome formation by ubiquitinating RIPK1 and CASP8. The sequence is that of Baculoviral IAP repeat-containing protein 3 (BIRC3) from Homo sapiens (Human).